Here is a 130-residue protein sequence, read N- to C-terminus: Small ribosomal subunit protein uS9 (130 aa).

Residues 101-110 are compositionally biased toward basic and acidic residues; it reads AGFLTRDPRM. The disordered stretch occupies residues 101 to 130; it reads AGFLTRDPRMKERKKYGLKKARRAPQFSKR. Basic residues predominate over residues 111–130; the sequence is KERKKYGLKKARRAPQFSKR.

It belongs to the universal ribosomal protein uS9 family.

This Clostridium tetani (strain Massachusetts / E88) protein is Small ribosomal subunit protein uS9.